Consider the following 346-residue polypeptide: Inositol 2-dehydrogenase/D-chiro-inositol 3-dehydrogenase (346 aa).

It belongs to the Gfo/Idh/MocA family. Homotetramer.

The enzyme catalyses myo-inositol + NAD(+) = scyllo-inosose + NADH + H(+). It carries out the reaction 1D-chiro-inositol + NAD(+) = scyllo-inosine + NADH + H(+). It functions in the pathway polyol metabolism; myo-inositol degradation into acetyl-CoA; acetyl-CoA from myo-inositol: step 1/7. Functionally, involved in the oxidation of myo-inositol (MI) and D-chiro-inositol (DCI) to 2-keto-myo-inositol (2KMI or 2-inosose) and 1-keto-D-chiro-inositol (1KDCI), respectively. This chain is Inositol 2-dehydrogenase/D-chiro-inositol 3-dehydrogenase, found in Lacticaseibacillus casei (Lactobacillus casei).